The primary structure comprises 231 residues: Probable septum site-determining protein MinC (231 aa).

Positions 100–125 (EGKEKSPRPAPAPQAPAQNTTPVTKT) are disordered.

It belongs to the MinC family. In terms of assembly, interacts with MinD and FtsZ.

In terms of biological role, cell division inhibitor that blocks the formation of polar Z ring septums. Rapidly oscillates between the poles of the cell to destabilize FtsZ filaments that have formed before they mature into polar Z rings. Prevents FtsZ polymerization. This chain is Probable septum site-determining protein MinC, found in Escherichia coli O81 (strain ED1a).